The primary structure comprises 217 residues: MDATLSTRRHSHLDSLLIETQRVFEVVFGHPVAQRPSPANAFPNLLLSPKDRRHAAGLMRINHVGEICAQGLYFGQVLVARKQELRRHLLKAAQEETDHLSWCSDRLYELESRPSLFNPFWYSGSYILGVFAGLLGDPWSLGFVVETERQVEAHLEKHLQVLPESDARSREILRVMKVEEARHADQADHAGARLLPSPITGAMAWAARLMKVVAYRI.

Residues E66, E96, H99, E148, E180, and H183 each contribute to the Fe cation site.

The protein belongs to the COQ7 family. The cofactor is Fe cation.

It is found in the cell membrane. The enzyme catalyses a 5-methoxy-2-methyl-3-(all-trans-polyprenyl)benzene-1,4-diol + AH2 + O2 = a 3-demethylubiquinol + A + H2O. The protein operates within cofactor biosynthesis; ubiquinone biosynthesis. Its function is as follows. Catalyzes the hydroxylation of 2-nonaprenyl-3-methyl-6-methoxy-1,4-benzoquinol during ubiquinone biosynthesis. The polypeptide is 3-demethoxyubiquinol 3-hydroxylase (Xylella fastidiosa (strain Temecula1 / ATCC 700964)).